The chain runs to 76 residues: MRFYIGLMAALMLTSILRTDSASVGQTGTKSELALIERVIRQRDAADVKPVARHNDGPGRDPAPCCQHPIETCCRR.

The N-terminal stretch at 1 to 22 is a signal peptide; it reads MRFYIGLMAALMLTSILRTDSA. Residues 23–42 constitute a propeptide that is removed on maturation; the sequence is SVGQTGTKSELALIERVIRQ. Position 50 is a 4-hydroxyproline (Pro50). 4-hydroxyproline; partial occurs at positions 58, 62, and 64.

The protein belongs to the conotoxin T superfamily. In terms of processing, contains 2 disulfide bonds that can be either 'C1-C3, C2-C4' or 'C1-C4, C2-C3', since these disulfide connectivities have been observed for conotoxins with cysteine framework V (for examples, see AC P0DQQ7 and AC P81755). In terms of tissue distribution, expressed by the venom duct.

It is found in the secreted. Probable neurotoxin with unknown target. Possibly targets ion channels. This Californiconus californicus (California cone) protein is Conotoxin Cal5a L2.